A 122-amino-acid chain; its full sequence is Alkene monooxygenase system, ferredoxin component (122 aa).

The region spanning 16–111 is the Rieske domain; it reads VDVCAVDDLW…LKVEGGRVLI (96 aa). Residues C55, H57, C75, and H78 each contribute to the [2Fe-2S] cluster site.

The protein belongs to the bacterial ring-hydroxylating dioxygenase ferredoxin component family. Homodimer. The alkene monooxygenase multicomponent enzyme system is composed of an electron transfer component and a monooxygenase component interacting with the effector protein XamoD. The electron transfer component is composed of a ferredoxin reductase (XamoF) and a ferredoxin (XamoC), and the monooxygenase component is formed by a heterohexamer (dimer of heterotrimers) of two alpha subunits (XamoA), two beta subunits (XamoE) and two gamma subunits (XamoB). [2Fe-2S] cluster is required as a cofactor.

Its subcellular location is the cytoplasm. Its function is as follows. Ferredoxin component of the alkene monooxygenase multicomponent enzyme system which catalyzes the O2- and NADH-dependent epoxidation of short chain (C2 to C6) alkenes to their corresponding epoxides. Functions as an intermediate electron transfer protein. This Xanthobacter autotrophicus (strain ATCC BAA-1158 / Py2) protein is Alkene monooxygenase system, ferredoxin component.